A 330-amino-acid chain; its full sequence is 2-keto-3-deoxygluconate permease (330 aa).

Transmembrane regions (helical) follow at residues 10-30, 42-62, 77-97, 100-120, 140-160, 163-183, 200-220, 224-244, 254-274, and 289-309; these read VPGG…TFAP, ALIT…GATI, LLLG…QFIP, GIQS…VMNE, GAFA…TFGV, LAAF…LGCI, PAII…GMLI, LLGI…LFLL, VAGV…YALA, and AIIA…TVWV.

This sequence belongs to the KdgT transporter family.

The protein resides in the cell membrane. The enzyme catalyses 2-dehydro-3-deoxy-D-gluconate(in) + H(+)(in) = 2-dehydro-3-deoxy-D-gluconate(out) + H(+)(out). Functionally, catalyzes the proton-dependent uptake of 2-keto-3-deoxygluconate (KDG) into the cell. This is 2-keto-3-deoxygluconate permease from Bacillus subtilis (strain 168).